Consider the following 143-residue polypeptide: Large ribosomal subunit protein uL11 (143 aa).

It belongs to the universal ribosomal protein uL11 family. As to quaternary structure, part of the ribosomal stalk of the 50S ribosomal subunit. Interacts with L10 and the large rRNA to form the base of the stalk. L10 forms an elongated spine to which L12 dimers bind in a sequential fashion forming a multimeric L10(L12)X complex. In terms of processing, one or more lysine residues are methylated.

Functionally, forms part of the ribosomal stalk which helps the ribosome interact with GTP-bound translation factors. This chain is Large ribosomal subunit protein uL11, found in Burkholderia multivorans (strain ATCC 17616 / 249).